The sequence spans 204 residues: MEAYKKHTSIAALMNRSNVDTDQIIPTQFLKKVERTGFGIHLFHDWRFLADNVTPNPEFELNKPVFKGAKILVTGDNFGCGSSREHAPWAIADYGFNTVISTSFADIFYTNCFKNALLPIRVSKDELAALMAEISANEGVKFTVDLEAEKLTTPGGIVIHIEVDPFRKESLLGGLDDIAWTLKHEDKITAFEEKQKQTLPWLWK.

The protein belongs to the LeuD family. LeuD type 1 subfamily. In terms of assembly, heterodimer of LeuC and LeuD.

It catalyses the reaction (2R,3S)-3-isopropylmalate = (2S)-2-isopropylmalate. It functions in the pathway amino-acid biosynthesis; L-leucine biosynthesis; L-leucine from 3-methyl-2-oxobutanoate: step 2/4. Catalyzes the isomerization between 2-isopropylmalate and 3-isopropylmalate, via the formation of 2-isopropylmaleate. This Psychromonas ingrahamii (strain DSM 17664 / CCUG 51855 / 37) protein is 3-isopropylmalate dehydratase small subunit.